A 417-amino-acid polypeptide reads, in one-letter code: NADH-quinone oxidoreductase subunit D (417 aa).

The protein belongs to the complex I 49 kDa subunit family. In terms of assembly, NDH-1 is composed of 14 different subunits. Subunits NuoB, C, D, E, F, and G constitute the peripheral sector of the complex.

The protein resides in the cell inner membrane. The enzyme catalyses a quinone + NADH + 5 H(+)(in) = a quinol + NAD(+) + 4 H(+)(out). In terms of biological role, NDH-1 shuttles electrons from NADH, via FMN and iron-sulfur (Fe-S) centers, to quinones in the respiratory chain. The immediate electron acceptor for the enzyme in this species is believed to be ubiquinone. Couples the redox reaction to proton translocation (for every two electrons transferred, four hydrogen ions are translocated across the cytoplasmic membrane), and thus conserves the redox energy in a proton gradient. The chain is NADH-quinone oxidoreductase subunit D from Alkalilimnicola ehrlichii (strain ATCC BAA-1101 / DSM 17681 / MLHE-1).